Reading from the N-terminus, the 570-residue chain is Urease subunit alpha (570 aa).

His137, His139, and Lys220 together coordinate Ni(2+). Position 220 is an N6-carboxylysine (Lys220). His222 lines the substrate pocket. Positions 249 and 275 each coordinate Ni(2+). His323 acts as the Proton donor in catalysis. Position 363 (Asp363) interacts with Ni(2+).

The protein belongs to the metallo-dependent hydrolases superfamily. Urease alpha subunit family. As to quaternary structure, heterotrimer of UreA (gamma), UreB (beta) and UreC (alpha) subunits. Three heterotrimers associate to form the active enzyme. Requires Ni cation as cofactor. Post-translationally, carboxylation allows a single lysine to coordinate two nickel ions.

It localises to the cytoplasm. The enzyme catalyses urea + 2 H2O + H(+) = hydrogencarbonate + 2 NH4(+). It functions in the pathway nitrogen metabolism; urea degradation; CO(2) and NH(3) from urea (urease route): step 1/1. This chain is Urease subunit alpha, found in Lachnoclostridium phytofermentans (strain ATCC 700394 / DSM 18823 / ISDg) (Clostridium phytofermentans).